We begin with the raw amino-acid sequence, 48 residues long: MPQLVPFYFINILSFGFLIFTVLLYISSVYVLPRYNELFISRSIISSL.

Residues 4–24 form a helical membrane-spanning segment; it reads LVPFYFINILSFGFLIFTVLL.

Belongs to the ATPase protein 8 family. As to quaternary structure, F-type ATPases have 2 components, CF(1) - the catalytic core - and CF(0) - the membrane proton channel.

It localises to the mitochondrion membrane. Functionally, mitochondrial membrane ATP synthase (F(1)F(0) ATP synthase or Complex V) produces ATP from ADP in the presence of a proton gradient across the membrane which is generated by electron transport complexes of the respiratory chain. F-type ATPases consist of two structural domains, F(1) - containing the extramembraneous catalytic core and F(0) - containing the membrane proton channel, linked together by a central stalk and a peripheral stalk. During catalysis, ATP synthesis in the catalytic domain of F(1) is coupled via a rotary mechanism of the central stalk subunits to proton translocation. Part of the complex F(0) domain. Minor subunit located with subunit a in the membrane. This chain is ATP synthase protein 8 (atp8), found in Schizosaccharomyces pombe (strain 972 / ATCC 24843) (Fission yeast).